The sequence spans 532 residues: MQFFAKQNCQVNLLTNNPSSNPRFIMEINSAATLTLVSLLTLPILLALLTRKSSSKKRRPPGPWNLPLVGGLLHLLRSHPQVALRELASKYGPVMFLRMGQIDTVVVSSPAAAQEVLRDKDVMFASRPSLLVSEIFCYDNLDVGFAPYGAYWRMLRKLCTVELLSTKVVRQLAPVRNDETLTLVRNIKAASSGHGGGGGKKPVTLARLLTTCTNTITAKAAFGQACGVELQEQFLTALDVGLKFSGGFCFGDLFPSLRFIDAMTGLRSRLWRARGQLDSVFDKIIAQCEEHQGDSLVNVLLRIRDQGDLEFPFGTTNIKAIILDMFTGGTETTSSAAEWVMSELMRNPEVMAKVQAEVRRVFDNKSPQDHEGLIDNLRYMKMVIKETMRLNPVLPLLMPHLCRETCDIGGYEVVEGTRVVINSWAMARSPEYWDDAEEFKPERFEDGMADYKGSRFEYLPFGTGRRRCPGDTFGMVLLELIVARLLYYFDWSLPAGMQPDDVDMDFVVTATTRRKNHLQLVASPYKLAPIQI.

The chain crosses the membrane as a helical span at residues 30–50; the sequence is SAATLTLVSLLTLPILLALLT. Position 468 (C468) interacts with heme. A helical membrane pass occupies residues 473-493; the sequence is FGMVLLELIVARLLYYFDWSL.

This sequence belongs to the cytochrome P450 family. Heme serves as cofactor.

It is found in the membrane. Its function is as follows. Involved in momilactone phytoalexins biosynthesis. Participates in the biosynthetic steps between 9-beta-pimara-7,15-diene and 3-beta-hydroxy-9-beta-pimara-7,15-dien-19,6-beta-olide. This chain is Cytochrome P450 99A2 (CYP99A2), found in Oryza sativa subsp. japonica (Rice).